A 1053-amino-acid chain; its full sequence is Focal adhesion kinase 1 (1053 aa).

The interval 1-27 is disordered; it reads MAAAYLDPNLNHTPSSSAKTHLGTGME. Positions 10–19 are enriched in polar residues; it reads LNHTPSSSAK. Residues 35-355 enclose the FERM domain; the sequence is RVLKVFHYFE…GYCRLVNGAT (321 aa). Tyrosine 397 is modified (phosphotyrosine; by autocatalysis). Position 407 is a phosphotyrosine (tyrosine 407). The region spanning 422–680 is the Protein kinase domain; it reads IELGRCIGEG…ELKAQLSTIL (259 aa). Residues 428 to 434, lysine 454, and 500 to 502 each bind ATP; these read IGEGQFG and ELC. Aspartate 546 functions as the Proton acceptor in the catalytic mechanism. A phosphotyrosine; by SRC mark is found at tyrosine 576 and tyrosine 577. Over residues 686–697 the composition is skewed to basic and acidic residues; that stretch reads QQEERMRMESRR. Disordered regions lie at residues 686–741 and 843–892; these read QQEE…QPNH and RGSI…LASL. The residue at position 863 (tyrosine 863) is a Phosphotyrosine. Position 911 is a phosphoserine (serine 911). The residue at position 926 (tyrosine 926) is a Phosphotyrosine.

It belongs to the protein kinase superfamily. Tyr protein kinase family. FAK subfamily. As to quaternary structure, interacts with ARHGAP26, GRB7, DCC, PIK3R1, PXN and SRC. Interacts with the ARP2/3 complex. Post-translationally, phosphorylated on tyrosine residues upon activation, e.g. upon integrin signaling. Tyr-397 is the major autophosphorylation site, but other kinases can also phosphorylate this residue. Phosphorylation at Tyr-397 promotes interaction with SRC and SRC family members, leading to phosphorylation at Tyr-576, Tyr-577 and at additional tyrosine residues. Isoform 2 is phosphorylated on serine or threonine residues, but apparently not on tyrosine residues.

The protein resides in the cell junction. The protein localises to the focal adhesion. It is found in the cell membrane. It localises to the cytoplasm. Its subcellular location is the perinuclear region. The protein resides in the cell cortex. The protein localises to the cytoskeleton. It is found in the microtubule organizing center. It localises to the centrosome. Its subcellular location is the nucleus. The protein resides in the cilium basal body. It catalyses the reaction L-tyrosyl-[protein] + ATP = O-phospho-L-tyrosyl-[protein] + ADP + H(+). With respect to regulation, subject to autoinhibition, mediated by interactions between the FERM domain and the kinase domain. Activated by autophosphorylation at Tyr-397. This promotes interaction with SRC and phosphorylation at Tyr-576 and Tyr-577 in the kinase activation loop. Phosphorylation at Tyr-576 and Tyr-577 is required for maximal kinase activity. Inhibited by TAE226. Non-receptor protein-tyrosine kinase that plays an essential role in regulating cell migration, adhesion, spreading, reorganization of the actin cytoskeleton, formation and disassembly of focal adhesions and cell protrusions, cell cycle progression, cell proliferation and apoptosis. Required for early embryonic development, embryonic angiogenesis, normal cardiomyocyte migration and proliferation, and normal heart development. Regulates axon growth and neuronal cell migration, axon branching and synapse formation; required for normal development of the nervous system. Plays a role in osteogenesis and differentiation of osteoblasts. Functions in integrin signal transduction, but also in signaling downstream of numerous growth factor receptors, G-protein coupled receptors (GPCR), ephrin receptors, netrin receptors and LDL receptors. Forms multisubunit signaling complexes with SRC and SRC family members upon activation; this leads to the phosphorylation of additional tyrosine residues, creating binding sites for scaffold proteins, effectors and substrates. Regulates numerous signaling pathways. Promotes activation of phosphatidylinositol 3-kinase and the AKT1 signaling cascade. Promotes activation of MAPK1/ERK2, MAPK3/ERK1 and the MAP kinase signaling cascade. Promotes localized and transient activation of guanine nucleotide exchange factors (GEFs) and GTPase-activating proteins (GAPs), and thereby modulates the activity of Rho family GTPases. Signaling via CAS family members mediates activation of RAC1. Regulates P53/TP53 activity and stability. Phosphorylates SRC; this increases SRC kinase activity. Isoform 2 (FRNK) does not contain a kinase domain and inhibits PTK2/FAK1 phosphorylation and signaling. In Gallus gallus (Chicken), this protein is Focal adhesion kinase 1 (PTK2).